The sequence spans 553 residues: Methyl-coenzyme M reductase II subunit alpha (553 aa).

Q150 is a coenzyme F430 binding site. Residues R228, 259-260, and R273 contribute to the coenzyme B site; that span reads KH. H260 is subject to Pros-methylhistidine. R274 bears the 5-methylarginine mark. Y335 is a binding site for coenzyme M. The residue at position 402 (Q402) is a 2-methylglutamine. Y446 is a coenzyme M binding site. Position 447 is a 1-thioglycine (G447). D452 bears the (Z)-2,3-didehydroaspartate mark. An S-methylcysteine modification is found at C454.

It belongs to the methyl-coenzyme M reductase alpha subunit family. In terms of assembly, MCR is a hexamer of two alpha, two beta, and two gamma chains, forming a dimer of heterotrimers. The cofactor is coenzyme F430. In terms of processing, the alpha subunit contains six modified amino acids near the active site region. Is methylated on His-260, Arg-274, Gln-402 and Cys-454, probably by the action of specific S-adenosylmethionine-dependent methyltransferases. Also contains a thioglycine at position 447, forming a thiopeptide bond. Contains a didehydroaspartate residue at position 452. The methylation on C5 of Arg-274 is a post-translational methylation not essential in vivo, but which plays a role for the stability and structural integrity of MCR.

It carries out the reaction coenzyme B + methyl-coenzyme M = methane + coenzyme M-coenzyme B heterodisulfide. It participates in one-carbon metabolism; methyl-coenzyme M reduction; methane from methyl-coenzyme M: step 1/1. Functionally, component of the methyl-coenzyme M reductase (MCR) I that catalyzes the reductive cleavage of methyl-coenzyme M (CoM-S-CH3 or 2-(methylthio)ethanesulfonate) using coenzyme B (CoB or 7-mercaptoheptanoylthreonine phosphate) as reductant which results in the production of methane and the mixed heterodisulfide of CoB and CoM (CoM-S-S-CoB). This is the final step in methanogenesis. This is Methyl-coenzyme M reductase II subunit alpha (mrtA) from Methanothermobacter marburgensis (strain ATCC BAA-927 / DSM 2133 / JCM 14651 / NBRC 100331 / OCM 82 / Marburg) (Methanobacterium thermoautotrophicum).